The primary structure comprises 334 residues: GTPase Obg (334 aa).

One can recognise an Obg domain in the interval 1–159 (MRFVDEVVIK…KEVRLELNLL (159 aa)). Residues 160–331 (ADIALLGLPN…LAKKLNEFLH (172 aa)) enclose the OBG-type G domain. Residues 166-173 (GLPNAGKS), 191-195 (FTTMY), 212-215 (DIPG), 282-285 (NKID), and 312-314 (SAA) contribute to the GTP site. The Mg(2+) site is built by serine 173 and threonine 193.

Belongs to the TRAFAC class OBG-HflX-like GTPase superfamily. OBG GTPase family. In terms of assembly, monomer. Mg(2+) serves as cofactor.

The protein localises to the cytoplasm. An essential GTPase which binds GTP, GDP and possibly (p)ppGpp with moderate affinity, with high nucleotide exchange rates and a fairly low GTP hydrolysis rate. Plays a role in control of the cell cycle, stress response, ribosome biogenesis and in those bacteria that undergo differentiation, in morphogenesis control. This chain is GTPase Obg, found in Francisella philomiragia subsp. philomiragia (strain ATCC 25017 / CCUG 19701 / FSC 153 / O#319-036).